We begin with the raw amino-acid sequence, 544 residues long: Glucans biosynthesis protein G (544 aa).

The N-terminal stretch at 1-34 is a signal peptide; sequence MVSLLRCQSSKPYSSLICSLALGVAFALSGTAYA.

This sequence belongs to the OpgD/OpgG family.

It localises to the periplasm. Its pathway is glycan metabolism; osmoregulated periplasmic glucan (OPG) biosynthesis. In terms of biological role, involved in the biosynthesis of osmoregulated periplasmic glucans (OPGs). This Shewanella putrefaciens (strain CN-32 / ATCC BAA-453) protein is Glucans biosynthesis protein G.